The sequence spans 131 residues: Small ribosomal subunit protein uS11 (131 aa).

Belongs to the universal ribosomal protein uS11 family. In terms of assembly, part of the 30S ribosomal subunit. Interacts with proteins S7 and S18. Binds to IF-3.

In terms of biological role, located on the platform of the 30S subunit, it bridges several disparate RNA helices of the 16S rRNA. Forms part of the Shine-Dalgarno cleft in the 70S ribosome. In Natranaerobius thermophilus (strain ATCC BAA-1301 / DSM 18059 / JW/NM-WN-LF), this protein is Small ribosomal subunit protein uS11.